Consider the following 113-residue polypeptide: Small ribosomal subunit protein mS41 (113 aa).

Residues 1–22 (MLILKRIFIIRNFIFPFSNCRY) constitute a mitochondrion transit peptide.

Belongs to the mitochondrion-specific ribosomal protein mS41 family. As to quaternary structure, component of the mitochondrial small ribosomal subunit (mt-SSU). Mature yeast 74S mitochondrial ribosomes consist of a small (37S) and a large (54S) subunit. The 37S small subunit contains a 15S ribosomal RNA (15S mt-rRNA) and at least 32 different proteins. The 54S large subunit contains a 21S rRNA (21S mt-rRNA) and at least 45 different proteins.

The protein resides in the mitochondrion. Functionally, component of the mitochondrial ribosome (mitoribosome), a dedicated translation machinery responsible for the synthesis of mitochondrial genome-encoded proteins, including at least some of the essential transmembrane subunits of the mitochondrial respiratory chain. The mitoribosomes are attached to the mitochondrial inner membrane and translation products are cotranslationally integrated into the membrane. mS41 is involved in telomere length regulation. The sequence is that of Small ribosomal subunit protein mS41 (fyv4) from Schizosaccharomyces pombe (strain 972 / ATCC 24843) (Fission yeast).